We begin with the raw amino-acid sequence, 372 residues long: 4-hydroxy-3-methylbut-2-en-1-yl diphosphate synthase (flavodoxin) (372 aa).

[4Fe-4S] cluster contacts are provided by Cys-270, Cys-273, Cys-305, and Glu-312.

This sequence belongs to the IspG family. The cofactor is [4Fe-4S] cluster.

The enzyme catalyses (2E)-4-hydroxy-3-methylbut-2-enyl diphosphate + oxidized [flavodoxin] + H2O + 2 H(+) = 2-C-methyl-D-erythritol 2,4-cyclic diphosphate + reduced [flavodoxin]. Its pathway is isoprenoid biosynthesis; isopentenyl diphosphate biosynthesis via DXP pathway; isopentenyl diphosphate from 1-deoxy-D-xylulose 5-phosphate: step 5/6. Its function is as follows. Converts 2C-methyl-D-erythritol 2,4-cyclodiphosphate (ME-2,4cPP) into 1-hydroxy-2-methyl-2-(E)-butenyl 4-diphosphate. The protein is 4-hydroxy-3-methylbut-2-en-1-yl diphosphate synthase (flavodoxin) of Salmonella arizonae (strain ATCC BAA-731 / CDC346-86 / RSK2980).